The sequence spans 306 residues: 2-phosphoglycerate kinase (306 aa).

The 90-residue stretch at 1 to 90 (MIMVQGEVSG…LWRKIRQCKE (90 aa)) folds into the ATP-cone domain.

This sequence belongs to the 2-phosphoglycerate kinase family. A divalent metal cation is required as a cofactor.

The enzyme catalyses (2R)-2-phosphoglycerate + ATP = (2R)-2,3-bisphosphoglycerate + ADP + H(+). It functions in the pathway thermoadapter biosynthesis; cyclic 2,3-diphosphoglycerate biosynthesis; cyclic 2,3-diphosphoglycerate from 2-phospho-D-glycerate: step 1/2. Catalyzes the phosphorylation of 2-phosphoglycerate to 2,3-diphosphoglycerate. Involved in the biosynthesis of cyclic 2,3-bisphosphoglycerate, a thermoprotectant. The protein is 2-phosphoglycerate kinase of Methanothermobacter thermautotrophicus (strain ATCC 29096 / DSM 1053 / JCM 10044 / NBRC 100330 / Delta H) (Methanobacterium thermoautotrophicum).